We begin with the raw amino-acid sequence, 146 residues long: VEWTDFERATIKDIFSKLEYDVVGPATLARCLVVYPWTQRYFGKFGNLYNATAIAENAMVSKHGTTILHGLDRAVKNMDDIKNTYAELSVLHSEKLHVDPDNFKLLADCLTIVVAARFGSAFTGEVQAAFEKFMAVVVSSLGRQYH.

Residues 2–146 form the Globin domain; the sequence is EWTDFERATI…VVSSLGRQYH (145 aa). 2 residues coordinate heme b: His63 and His92.

The protein belongs to the globin family. As to quaternary structure, hbC is a heterotetramer of two alpha chains and two beta-C chains. In terms of tissue distribution, red blood cells.

Involved in oxygen transport from gills to the various peripheral tissues. In Trematomus bernacchii (Emerald rockcod), this protein is Hemoglobin subunit beta-C (hbbc).